The sequence spans 207 residues: LexA repressor (207 aa).

The H-T-H motif DNA-binding region spans 28 to 48; sequence VREIGEAVGLASSFTVHGHLS. Catalysis depends on for autocatalytic cleavage activity residues Ser130 and Lys168.

This sequence belongs to the peptidase S24 family. Homodimer.

The catalysed reaction is Hydrolysis of Ala-|-Gly bond in repressor LexA.. In terms of biological role, represses a number of genes involved in the response to DNA damage (SOS response), including recA and lexA. In the presence of single-stranded DNA, RecA interacts with LexA causing an autocatalytic cleavage which disrupts the DNA-binding part of LexA, leading to derepression of the SOS regulon and eventually DNA repair. This Staphylococcus aureus (strain Newman) protein is LexA repressor.